We begin with the raw amino-acid sequence, 1093 residues long: Protein transport protein Sec24A (1093 aa).

Disordered regions lie at residues 1–29, 60–168, 189–226, and 294–328; these read MSQPGIPASGGAPASLQAQNGAALASGSP, HPIP…TSLT, GPSVPPLVNPPLPTTFQPGAPHGPPPAGGPPPVRALTP, and SLPPGYQNTTPPGATGVPPSSLNYPSGPQAFTQTP. Composition is skewed to polar residues over residues 112 to 126 and 138 to 168; these read ASQNPATTPMPSSSF and WQYNYPSTASQTNHCPRASSQPTVSGNTSLT. Composition is skewed to pro residues over residues 191–201 and 209–221; these read SVPPLVNPPLP and PHGPPPAGGPPPV. The span at 299 to 328 shows a compositional bias: polar residues; that stretch reads YQNTTPPGATGVPPSSLNYPSGPQAFTQTP. Zn(2+)-binding residues include Cys-431, Cys-434, Cys-452, and Cys-455. Positions 431–455 are zinc finger-like; that stretch reads CRSCRTYINPFVSFLDQRRWKCNLC. The Gelsolin-like repeat unit spans residues 966–1038; sequence PQPPILQLSV…TPESARIIAF (73 aa).

The protein belongs to the SEC23/SEC24 family. SEC24 subfamily. As to quaternary structure, COPII is composed of at least five proteins: the Sec23/24 complex, the Sec13/31 complex and Sar1. Interacts with TMED2. Interacts (as part of the Sec23/24 complex) with SEC22B; recruits SEC22B into COPII-coated vesicles for its transport from the endoplasmic reticulum to the Golgi. Interacts with STING1; promoting STING1 translocation to COPII vesicles in a STEEP1-dependent manner. Interacts with TMEM39A. Interacts with SACM1L; this interaction is reduced in the absence of TMEM39A. Interacts with kinase FAM20C; transport of FAM20C from the endoplasmic reticulum to the Golgi is likely to be mediated by COPII vesicles.

The protein localises to the cytoplasmic vesicle. It localises to the COPII-coated vesicle membrane. It is found in the endoplasmic reticulum membrane. The protein resides in the cytoplasm. Its subcellular location is the cytosol. Component of the coat protein complex II (COPII) which promotes the formation of transport vesicles from the endoplasmic reticulum (ER). The coat has two main functions, the physical deformation of the endoplasmic reticulum membrane into vesicles and the selection of cargo molecules for their transport to the Golgi complex. Plays a central role in cargo selection within the COPII complex and together with SEC24B may have a different specificity compared to SEC24C and SEC24D. May package preferentially cargos with cytoplasmic DxE or LxxLE motifs and may also recognize conformational epitopes. The chain is Protein transport protein Sec24A from Homo sapiens (Human).